The following is a 499-amino-acid chain: Maturase K (499 aa).

Belongs to the intron maturase 2 family. MatK subfamily.

It is found in the plastid. The protein resides in the chloroplast. Functionally, usually encoded in the trnK tRNA gene intron. Probably assists in splicing its own and other chloroplast group II introns. In Ceratonia siliqua (Carob), this protein is Maturase K.